Consider the following 193-residue polypeptide: dCTP deaminase, dUMP-forming (193 aa).

DCTP-binding positions include 101-106 (KSSLGR), Asp-119, 127-129 (TLE), Gln-148, Tyr-162, and Gln-174. Catalysis depends on Glu-129, which acts as the Proton donor/acceptor. A disordered region spans residues 161–184 (PYGSETTGSHYQGQRGPTPSRSYQ).

It belongs to the dCTP deaminase family. As to quaternary structure, homotrimer.

It carries out the reaction dCTP + 2 H2O = dUMP + NH4(+) + diphosphate. It participates in pyrimidine metabolism; dUMP biosynthesis; dUMP from dCTP: step 1/1. Functionally, bifunctional enzyme that catalyzes both the deamination of dCTP to dUTP and the hydrolysis of dUTP to dUMP without releasing the toxic dUTP intermediate. In Bifidobacterium animalis subsp. lactis (strain AD011), this protein is dCTP deaminase, dUMP-forming.